Reading from the N-terminus, the 968-residue chain is Alanine--tRNA ligase, cytoplasmic (968 aa).

ATP-binding positions include arginine 77, histidine 95, tryptophan 176, and isoleucine 214–asparagine 216. L-alanine-binding residues include asparagine 216 and aspartate 239. Residue glycine 243 coordinates ATP. Positions 606, 610, 724, and 728 each coordinate Zn(2+).

This sequence belongs to the class-II aminoacyl-tRNA synthetase family. In terms of assembly, monomer. It depends on Zn(2+) as a cofactor.

It is found in the cytoplasm. It carries out the reaction tRNA(Ala) + L-alanine + ATP = L-alanyl-tRNA(Ala) + AMP + diphosphate. Catalyzes the attachment of alanine to tRNA(Ala) in a two-step reaction: alanine is first activated by ATP to form Ala-AMP and then transferred to the acceptor end of tRNA(Ala). Also edits incorrectly charged tRNA(Ala) via its editing domain. In Caenorhabditis elegans, this protein is Alanine--tRNA ligase, cytoplasmic.